The primary structure comprises 459 residues: MNVRDEGKTTAEKHGGGEENKSPENKWRFNSPLAQVSLMGFVCFCCPGMFNALSGMGGGGQVDPTAANNANTAVYTAFTVFGLLGGGFYNVLGPRLTLAAGCSTYVLYAGSFLYYNHHHHQAFAIVAGALLGCGAGLLWAGEGAVMTSYPPPHRKGTYIALFWSIFNLGGVIGGLIPFILNYQRSSAASVNDSTYIAFMCFMFAGVLLSFGILPATSVIRNDGSRCSAVKYSRPSTEAAAVLRLFLDRKMLLIVPAAWASNFFYSYQFNNVNGLLFNLRTRGFNNVFYWGAQMAGSIAIGYVMDFSFKSRRARGFTGISLVAVIGTIIWAGGLANQHGYSLDKLPEKKLDFKDSGIEFAGPFVLYMSYGLLDAMYQSMVYWLIGALADDSQTLSRYSGFYKGVQSAGAAVAWQVDTRKVPLMSQLIVNWSLTTVSYPLLVLLVYFYVKNDNDDDSNDKV.

The tract at residues 1-26 (MNVRDEGKTTAEKHGGGEENKSPENK) is disordered. 11 helical membrane-spanning segments follow: residues 38 to 58 (LMGF…GMGG), 73 to 93 (AVYT…NVLG), 96 to 116 (LTLA…LYYN), 122 to 142 (AFAI…WAGE), 159 to 179 (IALF…IPFI), 195 to 215 (YIAF…ILPA), 251 to 271 (LLIV…FNNV), 287 to 307 (FYWG…DFSF), 314 to 334 (GFTG…GGLA), 355 to 375 (GIEF…DAMY), and 425 to 445 (LIVN…LVYF).

It belongs to the unc-93 family.

It localises to the membrane. The polypeptide is UNC93-like protein 1 (Arabidopsis thaliana (Mouse-ear cress)).